A 118-amino-acid chain; its full sequence is NADH-ubiquinone oxidoreductase chain 3 (118 aa).

A run of 2 helical transmembrane segments spans residues 4–24 and 87–107; these read FAPICIYLVISLLVSLIPLGV and IDPFGSWSMMAFLLILTIGSL.

Belongs to the complex I subunit 3 family.

The protein localises to the mitochondrion membrane. It catalyses the reaction a ubiquinone + NADH + 5 H(+)(in) = a ubiquinol + NAD(+) + 4 H(+)(out). Its function is as follows. Core subunit of the mitochondrial membrane respiratory chain NADH dehydrogenase (Complex I) that is believed to belong to the minimal assembly required for catalysis. Complex I functions in the transfer of electrons from NADH to the respiratory chain. The immediate electron acceptor for the enzyme is believed to be ubiquinone. The sequence is that of NADH-ubiquinone oxidoreductase chain 3 (ND3) from Panax ginseng (Korean ginseng).